The primary structure comprises 678 residues: Glycine--tRNA ligase beta subunit (678 aa).

Belongs to the class-II aminoacyl-tRNA synthetase family. Tetramer of two alpha and two beta subunits.

Its subcellular location is the cytoplasm. It carries out the reaction tRNA(Gly) + glycine + ATP = glycyl-tRNA(Gly) + AMP + diphosphate. In Streptococcus thermophilus (strain ATCC BAA-491 / LMD-9), this protein is Glycine--tRNA ligase beta subunit.